A 254-amino-acid polypeptide reads, in one-letter code: Imidazole glycerol phosphate synthase subunit HisF (254 aa).

Catalysis depends on residues Asp12 and Asp131.

Belongs to the HisA/HisF family. As to quaternary structure, heterodimer of HisH and HisF.

The protein resides in the cytoplasm. The enzyme catalyses 5-[(5-phospho-1-deoxy-D-ribulos-1-ylimino)methylamino]-1-(5-phospho-beta-D-ribosyl)imidazole-4-carboxamide + L-glutamine = D-erythro-1-(imidazol-4-yl)glycerol 3-phosphate + 5-amino-1-(5-phospho-beta-D-ribosyl)imidazole-4-carboxamide + L-glutamate + H(+). The protein operates within amino-acid biosynthesis; L-histidine biosynthesis; L-histidine from 5-phospho-alpha-D-ribose 1-diphosphate: step 5/9. IGPS catalyzes the conversion of PRFAR and glutamine to IGP, AICAR and glutamate. The HisF subunit catalyzes the cyclization activity that produces IGP and AICAR from PRFAR using the ammonia provided by the HisH subunit. This is Imidazole glycerol phosphate synthase subunit HisF from Desulfitobacterium hafniense (strain Y51).